We begin with the raw amino-acid sequence, 198 residues long: uncharacterized protein (198 aa).

Disordered stretches follow at residues 15–69 and 172–198; these read RLGQ…KDTR and FSVK…LWGL. Basic and acidic residues-rich tracts occupy residues 37 to 49 and 56 to 69; these read HKSF…DQSR and FNEK…KDTR. The segment covering 176–186 has biased composition (low complexity); that stretch reads ESSNLSNNDSD. Acidic residues predominate over residues 187–198; it reads ASLDEDTLLWGL.

It localises to the nucleus. This is an uncharacterized protein from Schizosaccharomyces pombe (strain 972 / ATCC 24843) (Fission yeast).